We begin with the raw amino-acid sequence, 230 residues long: Cytidylate kinase (230 aa).

17–25 (GPTASGKGT) lines the ATP pocket.

Belongs to the cytidylate kinase family. Type 1 subfamily.

Its subcellular location is the cytoplasm. The enzyme catalyses CMP + ATP = CDP + ADP. The catalysed reaction is dCMP + ATP = dCDP + ADP. This Ralstonia nicotianae (strain ATCC BAA-1114 / GMI1000) (Ralstonia solanacearum) protein is Cytidylate kinase.